The primary structure comprises 125 residues: Large ribosomal subunit protein uL24 (125 aa).

This sequence belongs to the universal ribosomal protein uL24 family. In terms of assembly, part of the 50S ribosomal subunit.

Its function is as follows. One of two assembly initiator proteins, it binds directly to the 5'-end of the 23S rRNA, where it nucleates assembly of the 50S subunit. In terms of biological role, one of the proteins that surrounds the polypeptide exit tunnel on the outside of the subunit. The chain is Large ribosomal subunit protein uL24 from Mycoplasma mobile (strain ATCC 43663 / 163K / NCTC 11711) (Mesomycoplasma mobile).